Consider the following 587-residue polypeptide: Chaperonin GroEL 1 (587 aa).

Residues T29 to P32, D86 to T90, G413, and D492 each bind ATP.

The protein belongs to the chaperonin (HSP60) family. In terms of assembly, forms a cylinder of 14 subunits composed of two heptameric rings stacked back-to-back. Interacts with the co-chaperonin GroES.

The protein resides in the cytoplasm. It carries out the reaction ATP + H2O + a folded polypeptide = ADP + phosphate + an unfolded polypeptide.. Functionally, together with its co-chaperonin GroES, plays an essential role in assisting protein folding. The GroEL-GroES system forms a nano-cage that allows encapsulation of the non-native substrate proteins and provides a physical environment optimized to promote and accelerate protein folding. The sequence is that of Chaperonin GroEL 1 from Prochlorococcus marinus (strain MIT 9515).